Here is a 391-residue protein sequence, read N- to C-terminus: Ferrochelatase (391 aa).

2 residues coordinate Fe cation: histidine 196 and glutamate 281.

It belongs to the ferrochelatase family.

The protein resides in the cytoplasm. The enzyme catalyses heme b + 2 H(+) = protoporphyrin IX + Fe(2+). It functions in the pathway porphyrin-containing compound metabolism; protoheme biosynthesis; protoheme from protoporphyrin-IX: step 1/1. In terms of biological role, catalyzes the ferrous insertion into protoporphyrin IX. The sequence is that of Ferrochelatase from Synechococcus sp. (strain WH7803).